A 264-amino-acid polypeptide reads, in one-letter code: Thymidylate synthase (264 aa).

Arginine 21 provides a ligand contact to dUMP. Histidine 51 lines the (6R)-5,10-methylene-5,6,7,8-tetrahydrofolate pocket. 126–127 (RR) lines the dUMP pocket. Cysteine 146 functions as the Nucleophile in the catalytic mechanism. DUMP contacts are provided by residues 166–169 (RSCD), asparagine 177, and 207–209 (HLY). Aspartate 169 contacts (6R)-5,10-methylene-5,6,7,8-tetrahydrofolate. Position 263 (alanine 263) interacts with (6R)-5,10-methylene-5,6,7,8-tetrahydrofolate.

It belongs to the thymidylate synthase family. Bacterial-type ThyA subfamily. As to quaternary structure, homodimer.

The protein resides in the cytoplasm. It carries out the reaction dUMP + (6R)-5,10-methylene-5,6,7,8-tetrahydrofolate = 7,8-dihydrofolate + dTMP. Its pathway is pyrimidine metabolism; dTTP biosynthesis. Catalyzes the reductive methylation of 2'-deoxyuridine-5'-monophosphate (dUMP) to 2'-deoxythymidine-5'-monophosphate (dTMP) while utilizing 5,10-methylenetetrahydrofolate (mTHF) as the methyl donor and reductant in the reaction, yielding dihydrofolate (DHF) as a by-product. This enzymatic reaction provides an intracellular de novo source of dTMP, an essential precursor for DNA biosynthesis. This Shigella flexneri serotype 5b (strain 8401) protein is Thymidylate synthase.